Reading from the N-terminus, the 269-residue chain is Hydroxyethylthiazole kinase (269 aa).

Substrate is bound at residue Met48. Residues Lys124 and Thr170 each coordinate ATP. Gly197 contacts substrate.

This sequence belongs to the Thz kinase family. The cofactor is Mg(2+).

The catalysed reaction is 5-(2-hydroxyethyl)-4-methylthiazole + ATP = 4-methyl-5-(2-phosphooxyethyl)-thiazole + ADP + H(+). It functions in the pathway cofactor biosynthesis; thiamine diphosphate biosynthesis; 4-methyl-5-(2-phosphoethyl)-thiazole from 5-(2-hydroxyethyl)-4-methylthiazole: step 1/1. Its function is as follows. Catalyzes the phosphorylation of the hydroxyl group of 4-methyl-5-beta-hydroxyethylthiazole (THZ). This is Hydroxyethylthiazole kinase from Clostridium kluyveri (strain NBRC 12016).